Consider the following 274-residue polypeptide: Protein bax (274 aa).

Positions 32–64 (TTASQKSHLTKASNKQVSSKQEYSRNSAKSSSL) are enriched in polar residues. A disordered region spans residues 32–74 (TTASQKSHLTKASNKQVSSKQEYSRNSAKSSSLPDLRKYPSGT). 247–254 (GYSTKGKS) contributes to the ATP binding site.

The sequence is that of Protein bax (bax) from Escherichia coli (strain K12).